The sequence spans 172 residues: MDLKEKIRIIDGFPKEGISFKDITTLIGDGEGLKASIDMFVEYLKDKEIDLIVGPEARGFIFGVPVAYALGAGFVPVRKPGKLPGETISVNYDLEYGSDSLQIHKDSIKKGQRVAIVDDLLATGGTVEGVAKLVEEAGGEVVSLAFLIELIDLKGRDKLGDYDVISLTQYDI.

It belongs to the purine/pyrimidine phosphoribosyltransferase family. Homodimer.

Its subcellular location is the cytoplasm. The catalysed reaction is AMP + diphosphate = 5-phospho-alpha-D-ribose 1-diphosphate + adenine. Its pathway is purine metabolism; AMP biosynthesis via salvage pathway; AMP from adenine: step 1/1. Functionally, catalyzes a salvage reaction resulting in the formation of AMP, that is energically less costly than de novo synthesis. The protein is Adenine phosphoribosyltransferase of Clostridium botulinum (strain Alaska E43 / Type E3).